Here is a 161-residue protein sequence, read N- to C-terminus: Cyclic pyranopterin monophosphate synthase (161 aa).

Substrate contacts are provided by residues 75–77 (LCH) and 113–114 (ME). Aspartate 128 is a catalytic residue.

It belongs to the MoaC family. In terms of assembly, homohexamer; trimer of dimers.

It catalyses the reaction (8S)-3',8-cyclo-7,8-dihydroguanosine 5'-triphosphate = cyclic pyranopterin phosphate + diphosphate. Its pathway is cofactor biosynthesis; molybdopterin biosynthesis. Functionally, catalyzes the conversion of (8S)-3',8-cyclo-7,8-dihydroguanosine 5'-triphosphate to cyclic pyranopterin monophosphate (cPMP). The chain is Cyclic pyranopterin monophosphate synthase from Cupriavidus pinatubonensis (strain JMP 134 / LMG 1197) (Cupriavidus necator (strain JMP 134)).